The primary structure comprises 177 residues: Translation initiation factor IF-3 (177 aa).

It belongs to the IF-3 family. In terms of assembly, monomer.

The protein localises to the cytoplasm. Its function is as follows. IF-3 binds to the 30S ribosomal subunit and shifts the equilibrium between 70S ribosomes and their 50S and 30S subunits in favor of the free subunits, thus enhancing the availability of 30S subunits on which protein synthesis initiation begins. The protein is Translation initiation factor IF-3 of Synechocystis sp. (strain ATCC 27184 / PCC 6803 / Kazusa).